A 157-amino-acid polypeptide reads, in one-letter code: Snaclec EMS16 subunit alpha (157 aa).

A signal peptide spans 1-23; sequence MGRFISVSFGLLVVFLSLSGTGA. 3 cysteine pairs are disulfide-bonded: Cys27/Cys38, Cys55/Cys152, and Cys127/Cys144. Residues 34–153 enclose the C-type lectin domain; the sequence is YDQHCYLAIG…CEDLYPFVCK (120 aa).

The protein belongs to the snaclec family. In terms of assembly, heterodimer of subunits A and B; disulfide-linked. In terms of tissue distribution, expressed by the venom gland.

It is found in the secreted. EMS16 is a potent and selective inhibitor of alpha-2/beta-1 (ITGA2/ITGB1) integrin and acts as a potent antagonist of platelet aggregation and cell migration. Binds specifically to the I domain of the alpha-2 subunit, in a metal ion-independent fashion. The chain is Snaclec EMS16 subunit alpha from Echis multisquamatus (Central Asian sand viper).